The primary structure comprises 94 residues: MNACILLTTLVTMITIEKVQGQSYHFSNGWNPGKRSMQEPVCHFRQDVQTLVLKLIEDEVYRMLSDPSCIGGVPTLRNFLKKDLAYTVPLDDKK.

A signal peptide spans 1-21; it reads MNACILLTTLVTMITIEKVQG.

It localises to the secreted. Functionally, neuropeptide involved in reproduction. May be an important hormone in the regulation of gonadal maturation. The chain is Prepro-gonadotropin-releasing hormone-like protein from Ruditapes philippinarum (Japanese carpet shell).